Here is a 190-residue protein sequence, read N- to C-terminus: Thymidylate kinase (190 aa).

7–14 (GVDTCGKS) is an ATP binding site.

This sequence belongs to the thymidylate kinase family.

It carries out the reaction dTMP + ATP = dTDP + ADP. Its function is as follows. Phosphorylation of dTMP to form dTDP in both de novo and salvage pathways of dTTP synthesis. The sequence is that of Thymidylate kinase from Wolinella succinogenes (strain ATCC 29543 / DSM 1740 / CCUG 13145 / JCM 31913 / LMG 7466 / NCTC 11488 / FDC 602W) (Vibrio succinogenes).